The sequence spans 147 residues: UPF0306 protein YpAngola_A4021 (147 aa).

It belongs to the UPF0306 family.

This Yersinia pestis bv. Antiqua (strain Angola) protein is UPF0306 protein YpAngola_A4021.